The sequence spans 109 residues: Nucleoid-associated protein PM0205 (109 aa).

Belongs to the YbaB/EbfC family. Homodimer.

It localises to the cytoplasm. The protein localises to the nucleoid. Functionally, binds to DNA and alters its conformation. May be involved in regulation of gene expression, nucleoid organization and DNA protection. The sequence is that of Nucleoid-associated protein PM0205 from Pasteurella multocida (strain Pm70).